The following is a 182-amino-acid chain: Ribulose bisphosphate carboxylase small subunit, chloroplastic 4 (182 aa).

The N-terminal 41 residues, 1–41 (MSAAMMNKSVVLSKQCTKPAATPKVVTSKRSFASTVANKNR), are a transit peptide targeting the chloroplast.

It belongs to the RuBisCO small chain family. In terms of assembly, heterohexadecamer of 8 large and 8 small subunits.

Its subcellular location is the plastid. The protein localises to the chloroplast. In terms of biological role, ruBisCO catalyzes two reactions: the carboxylation of D-ribulose 1,5-bisphosphate, the primary event in carbon dioxide fixation, as well as the oxidative fragmentation of the pentose substrate. Both reactions occur simultaneously and in competition at the same active site. Although the small subunit is not catalytic it is essential for maximal activity. This Acetabularia acetabulum (Mermaid's wine glass) protein is Ribulose bisphosphate carboxylase small subunit, chloroplastic 4.